Reading from the N-terminus, the 390-residue chain is MEKLMKYASFFYTAVGIRPYTNGEESKMNKLIFHIVFWSNVINLSFVGLFESIYVYSAFMDNKFLEAVTALSYIGFVTVGMSKMFFIRWKKTAITELINELKEIYPNGLIREERYNLPMYLGTCSRISLIYSLLYSVLIWTFNLFCVMEYWVYDKWLNIRVVGKQLPYLMYIPWKWQDNWSYYPLLFSQNFAGYTSAAGQISTDVLLCAVATQLVMHFDFLSNSMERHELSGDWKKDSRFLVDIVRYHERILRLSDAVNDIFGIPLLLNFMVSSFVICFVGFQMTVGVPPDIVVKLFLFLVSSMSQVYLICHYGQLVADASYGFSVATYNQKWYKADVRYKRALVIIIARSQKVTFLKATIFLDITRSTMTDLLQISYKFFALLRTMYTQ.

Over 1–30 (MEKLMKYASFFYTAVGIRPYTNGEESKMNK) the chain is Cytoplasmic. A helical transmembrane segment spans residues 31–51 (LIFHIVFWSNVINLSFVGLFE). Topologically, residues 52 to 66 (SIYVYSAFMDNKFLE) are extracellular. A helical membrane pass occupies residues 67–87 (AVTALSYIGFVTVGMSKMFFI). Residues 88 to 126 (RWKKTAITELINELKEIYPNGLIREERYNLPMYLGTCSR) lie on the Cytoplasmic side of the membrane. A helical membrane pass occupies residues 127–147 (ISLIYSLLYSVLIWTFNLFCV). Residues 148 to 200 (MEYWVYDKWLNIRVVGKQLPYLMYIPWKWQDNWSYYPLLFSQNFAGYTSAAGQ) are Extracellular-facing. A glycan (N-linked (GlcNAc...) asparagine) is linked at Asn179. A helical membrane pass occupies residues 201-221 (ISTDVLLCAVATQLVMHFDFL). At 222–260 (SNSMERHELSGDWKKDSRFLVDIVRYHERILRLSDAVND) the chain is on the cytoplasmic side. The helical transmembrane segment at 261–281 (IFGIPLLLNFMVSSFVICFVG) threads the bilayer. The Extracellular portion of the chain corresponds to 282-291 (FQMTVGVPPD). A helical membrane pass occupies residues 292-312 (IVVKLFLFLVSSMSQVYLICH). Topologically, residues 313–360 (YGQLVADASYGFSVATYNQKWYKADVRYKRALVIIIARSQKVTFLKAT) are cytoplasmic. A helical transmembrane segment spans residues 361 to 381 (IFLDITRSTMTDLLQISYKFF). Residues 382-390 (ALLRTMYTQ) lie on the Extracellular side of the membrane.

The protein belongs to the insect chemoreceptor superfamily. Heteromeric odorant receptor channel (TC 1.A.69) family. Or49a subfamily. As to quaternary structure, interacts with Orco. Complexes exist early in the endomembrane system in olfactory sensory neurons (OSNs), coupling these complexes to the conserved ciliary trafficking pathway. In terms of tissue distribution, expressed in olfactory sensory neurons in the antenna.

The protein localises to the cell membrane. Functionally, odorant receptor which mediates acceptance or avoidance behavior, depending on its substrates. The odorant receptor repertoire encodes a large collection of odor stimuli that vary widely in identity, intensity, and duration. Forms a complex with Orco to form odorant-sensing units, providing sensitive and prolonged odorant signaling and calcium permeability. Involved in the behavioral responses to 2-heptanone, amyl acetate, and butyl acetate. The polypeptide is Odorant receptor 85b (Or85b) (Drosophila melanogaster (Fruit fly)).